A 502-amino-acid polypeptide reads, in one-letter code: N-fatty-acyl-amino acid synthase/hydrolase PM20D1 (502 aa).

A signal peptide spans 1–25 (MAQRCVCVLALVAMLLLVFPTVSRS). A Zn(2+)-binding site is contributed by histidine 125. Aspartate 127 is an active-site residue. Zn(2+) is bound at residue aspartate 157. Glutamate 191 acts as the Proton acceptor in catalysis. Glutamate 192 and aspartate 217 together coordinate Zn(2+). Asparagine 252 carries an N-linked (GlcNAc...) asparagine glycan. Histidine 464 is a binding site for Zn(2+).

It belongs to the peptidase M20A family. The cofactor is Zn(2+).

It localises to the secreted. The catalysed reaction is an N-acyl-L-amino acid + H2O = an L-alpha-amino acid + a carboxylate. The enzyme catalyses an N-acyl-aromatic L-alpha-amino acid + H2O = an aromatic L-alpha-amino acid + a carboxylate. It carries out the reaction L-phenylalanine + (9Z)-octadecenoate = N-(9Z-octadecenoyl)-L-phenylalanine + H2O. It catalyses the reaction N-(9Z-octadecenoyl)-L-leucine + H2O = L-leucine + (9Z)-octadecenoate. The catalysed reaction is N-(5Z,8Z,11Z,14Z)-eicosatetraenoyl-glycine + H2O = (5Z,8Z,11Z,14Z)-eicosatetraenoate + glycine. The enzyme catalyses N-hexadecanoyl-L-phenylalanine + H2O = hexadecanoate + L-phenylalanine. It carries out the reaction N-octadecanoyl-L-phenylalanine + H2O = octadecanoate + L-phenylalanine. It catalyses the reaction N-(4Z,7Z,10Z,13Z,16Z,19Z-docosahexaenoyl)-L-phenylalanine + H2O = (4Z,7Z,10Z,13Z,16Z,19Z)-docosahexaenoate + L-phenylalanine. The catalysed reaction is N-(9Z-octadecenoyl)-L-asparagine + H2O = L-asparagine + (9Z)-octadecenoate. The enzyme catalyses (9Z)-octadecenoate + glycine = N-(9Z-octadecenoyl)glycine + H2O. It carries out the reaction N-(9Z-octadecenoyl)-L-lysine + H2O = L-lysine + (9Z)-octadecenoate. It catalyses the reaction N-(9Z-octadecenoyl)-L-methionine + H2O = (9Z)-octadecenoate + L-methionine. The catalysed reaction is N-(9Z-octadecenoyl)-L-serine + H2O = L-serine + (9Z)-octadecenoate. The enzyme catalyses N-(9Z-octadecenoyl)-L-tryptophan + H2O = L-tryptophan + (9Z)-octadecenoate. It carries out the reaction N-(9Z-octadecenoyl)-L-tyrosine + H2O = L-tyrosine + (9Z)-octadecenoate. It catalyses the reaction N-(9Z-octadecenoyl)-L-glutamine + H2O = L-glutamine + (9Z)-octadecenoate. The catalysed reaction is N-(5Z,8Z,11Z,14Z-eicosatetraenoyl)-L-serine + H2O = (5Z,8Z,11Z,14Z)-eicosatetraenoate + L-serine. The enzyme catalyses (5Z,8Z,11Z,14Z)-eicosatetraenoate + L-phenylalanine = N-(5Z,8Z,11Z,14Z-eicosatetraenoyl)-L-phenylalanine + H2O. The protein operates within amino-acid metabolism. It functions in the pathway energy metabolism. Its pathway is lipid metabolism; fatty acid metabolism. With respect to regulation, lipoproteins are powerful coactivators of PM20D1 activity in vitro and NAA biosynthesis in vivo. Secreted enzyme that regulates the endogenous N-fatty acyl amino acid (NAAs) tissue and circulating levels by functioning as a bidirectional NAA synthase/hydrolase. It condenses free fatty acids and free amino acids to generate NAAs and bidirectionally catalyzes the reverse hydrolysis reaction. Some of these NAAs stimulate oxidative metabolism via mitochondrial uncoupling, increasing energy expenditure in a UPC1-independent manner. Thereby, this secreted protein may indirectly regulate whole body energy expenditure. PM20D1 circulates in tight association with both low- and high-density (LDL and HDL,respectively) lipoprotein particles. The sequence is that of N-fatty-acyl-amino acid synthase/hydrolase PM20D1 from Homo sapiens (Human).